The chain runs to 160 residues: Putative pre-16S rRNA nuclease (160 aa).

It belongs to the YqgF nuclease family.

The protein localises to the cytoplasm. In terms of biological role, could be a nuclease involved in processing of the 5'-end of pre-16S rRNA. In Cereibacter sphaeroides (strain KD131 / KCTC 12085) (Rhodobacter sphaeroides), this protein is Putative pre-16S rRNA nuclease.